The primary structure comprises 174 residues: 5-hydroxymethyl-dUMP N-hydrolase (174 aa).

A2 carries the post-translational modification N-acetylalanine. Residue G27 participates in 5-hydroxymethyl-dUMP binding. S28 carries the post-translational modification Phosphoserine. The 5-hydroxymethyl-dUMP site is built by I29, R30, G31, S98, G100, and E104. S98 is subject to Phosphoserine. S123, S128, S138, and S169 each carry phosphoserine. S128 contributes to the 5-hydroxymethyl-dUMP binding site.

Belongs to the 2'-deoxynucleoside 5'-phosphate N-hydrolase 1 family. Monomer and homodimer. In terms of tissue distribution, expressed at low levels in brain, colon, lung, peripheral blood leukocytes, placenta, small intestine, and thymus. Expressed at high levels in heart, kidney, liver, skeletal muscle and spleen. Overexpressed in a significant proportion of breast cancers.

The protein resides in the cytoplasm. It is found in the nucleus. It carries out the reaction 5-hydroxymethyl-dUMP + H2O = 5-hydroxymethyluracil + 2-deoxy-D-ribose 5-phosphate. Its activity is regulated as follows. Inhibited by AMP and GMP. Functionally, part of a nucleotide salvage pathway that eliminates epigenetically modified 5-hydroxymethyl-dCMP (hmdCMP) in a two-step process entailing deamination to cytotoxic 5-hydroxymethyl-dUMP (hmdUMP), followed by its hydrolysis into 5-hydroxymethyluracil (hmU) and 2-deoxy-D-ribose 5-phosphate (deoxyribosephosphate). Catalyzes the second step in that pathway, the hydrolysis of the N-glycosidic bond in hmdUMP, degrading this cytotoxic nucleotide to avoid its genomic integration. This chain is 5-hydroxymethyl-dUMP N-hydrolase, found in Homo sapiens (Human).